Reading from the N-terminus, the 104-residue chain is Synaptic plasticity regulator PANTS (104 aa).

Positions 58–104 (RRSAEAQADSLPPGPEGEPRVAGAGPNAVTGILTRNQGTERPHGDTR) are disordered. The span at 95 to 104 (GTERPHGDTR) shows a compositional bias: basic and acidic residues.

This sequence belongs to the UPF0545 family. Interacts with RTN4 isoform A/Nogo-A; the interaction results in enhanced RTN4-mediated inhibition of AMPA receptor clustering. Also interacts with NCAM1, RANBP2 and CCT8. Post-translationally, rapidly degraded by proteolysis following neuronal stimulation, resulting in increased AMPA receptor clustering.

It localises to the synapse. It is found in the synaptic cleft. Negatively regulates long-term potentiation and modulates adult synaptic plasticity. Stabilizes the interaction of RTN4 isoform A/Nogo-A with its receptors, inhibiting clustering of postsynaptic AMPA receptors at synaptic sites. Upon neuronal stimulation, degraded at synapses, reducing RTN4 signaling and allowing AMPA receptor clustering at individual synapses. The polypeptide is Synaptic plasticity regulator PANTS (Bos taurus (Bovine)).